Consider the following 612-residue polypeptide: Dihydroxy-acid dehydratase (612 aa).

Aspartate 81 contacts Mg(2+). Position 122 (cysteine 122) interacts with [2Fe-2S] cluster. 2 residues coordinate Mg(2+): aspartate 123 and lysine 124. At lysine 124 the chain carries N6-carboxylysine. Cysteine 195 contacts [2Fe-2S] cluster. Residue glutamate 492 coordinates Mg(2+). The active-site Proton acceptor is serine 518.

It belongs to the IlvD/Edd family. In terms of assembly, homodimer. The cofactor is [2Fe-2S] cluster. Requires Mg(2+) as cofactor.

It catalyses the reaction (2R)-2,3-dihydroxy-3-methylbutanoate = 3-methyl-2-oxobutanoate + H2O. The enzyme catalyses (2R,3R)-2,3-dihydroxy-3-methylpentanoate = (S)-3-methyl-2-oxopentanoate + H2O. It participates in amino-acid biosynthesis; L-isoleucine biosynthesis; L-isoleucine from 2-oxobutanoate: step 3/4. It functions in the pathway amino-acid biosynthesis; L-valine biosynthesis; L-valine from pyruvate: step 3/4. Its function is as follows. Functions in the biosynthesis of branched-chain amino acids. Catalyzes the dehydration of (2R,3R)-2,3-dihydroxy-3-methylpentanoate (2,3-dihydroxy-3-methylvalerate) into 2-oxo-3-methylpentanoate (2-oxo-3-methylvalerate) and of (2R)-2,3-dihydroxy-3-methylbutanoate (2,3-dihydroxyisovalerate) into 2-oxo-3-methylbutanoate (2-oxoisovalerate), the penultimate precursor to L-isoleucine and L-valine, respectively. The polypeptide is Dihydroxy-acid dehydratase (Kocuria rhizophila (strain ATCC 9341 / DSM 348 / NBRC 103217 / DC2201)).